A 264-amino-acid chain; its full sequence is uncharacterized protein (264 aa).

This is an uncharacterized protein from Escherichia coli (strain K12).